A 24-amino-acid polypeptide reads, in one-letter code: Brevinin-1La (24 aa).

Cys18 and Cys24 are disulfide-bonded.

Expressed by the skin glands.

It is found in the secreted. Its function is as follows. Antibacterial activity against Gram-positive bacterium S.aureus and Gram-negative bacterium E.coli. This chain is Brevinin-1La, found in Rana luteiventris (Columbia spotted frog).